The chain runs to 353 residues: Heterogeneous nuclear ribonucleoproteins A2/B1 (353 aa).

An N-acetylmethionine modification is found at M1. T4 is subject to Phosphothreonine. The Nuclear localization signal motif lies at 9 to 15; that stretch reads PLERKKR. 2 RRM domains span residues 21–104 and 112–191; these read RKLF…ESGK and KKLF…LSRQ. K22 participates in a covalent cross-link: Glycyl lysine isopeptide (Lys-Gly) (interchain with G-Cter in SUMO2). Position 29 is a phosphoserine (S29). An Omega-N-methylarginine modification is found at R38. A Phosphoserine modification is found at S85. K104 carries the post-translational modification N6,N6-dimethyllysine; alternate. A Glycyl lysine isopeptide (Lys-Gly) (interchain with G-Cter in SUMO2); alternate cross-link involves residue K104. Residues K112, K120, and K137 each participate in a glycyl lysine isopeptide (Lys-Gly) (interchain with G-Cter in SUMO2) cross-link. A Phosphothreonine modification is found at T140. A Phosphoserine modification is found at S149. Residue K152 forms a Glycyl lysine isopeptide (Lys-Gly) (interchain with G-Cter in SUMO2) linkage. T159 is subject to Phosphothreonine. Glycyl lysine isopeptide (Lys-Gly) (interchain with G-Cter in SUMO2); alternate cross-links involve residues K168 and K173. K168 and K173 each carry N6-acetyllysine; alternate. Position 176 is a phosphothreonine (T176). K186 is covalently cross-linked (Glycyl lysine isopeptide (Lys-Gly) (interchain with G-Cter in SUMO2)). S189 and S201 each carry phosphoserine. Residues 193-353 form a disordered region; the sequence is MQEVQSSRSG…SGGYGGRSRY (161 aa). Over residues 202–223 the composition is skewed to gly residues; that stretch reads GRGGNFGFGDSRGGGGNFGPGP. Asymmetric dimethylarginine; alternate is present on R203. R203 carries the dimethylated arginine; alternate modification. At R203 the chain carries Omega-N-methylarginine; alternate. S212 carries the post-translational modification Phosphoserine. R213 bears the Asymmetric dimethylarginine; alternate mark. R213 is subject to Dimethylated arginine; alternate. R213 carries the post-translational modification Omega-N-methylarginine; alternate. S225 is subject to Phosphoserine. R228 carries the post-translational modification Omega-N-methylarginine. Residues S231 and S236 each carry the phosphoserine modification. An Omega-N-methylarginine modification is found at R238. S259 carries the post-translational modification Phosphoserine. An Asymmetric dimethylarginine; alternate modification is found at R266. R266 carries the omega-N-methylarginine; alternate modification. Residues 308 to 347 form a nuclear targeting sequence region; the sequence is QQPSNYGPMKSGNFGGSRNMGGPYGGGNYGPGGSGGSGGY. Over residues 320 to 353 the composition is skewed to gly residues; sequence NFGGSRNMGGPYGGGNYGPGGSGGSGGYGGRSRY. Residue S324 is modified to Phosphoserine. R325 carries the omega-N-methylarginine modification. The residue at position 331 (Y331) is a Phosphotyrosine. 2 positions are modified to phosphoserine: S341 and S344. Y347 carries the post-translational modification Phosphotyrosine. R350 is subject to Omega-N-methylarginine.

Homodimer; dimerization is required for nucleocytoplasmic translocation. Identified in the spliceosome C complex. Identified in a IGF2BP1-dependent mRNP granule complex containing untranslated mRNAs. Interacts with IGF2BP1. Interacts with C9orf72. Interacts with DGCR8. Interacts with TARDBP. Interacts with CKAP5. Interacts with TBK1. Interacts with STING1. Interacts with SRC. Interacts with PPIA/CYPA. Interacts (via C-terminus) with FAM76B; the interaction results in retention of HNRNPA2B1 in the nucleus and inhibition of the NF-kappa-B-mediated inflammatory pathway. Interacts with NF-kappa-B inhibitors NFKBIA and NFKBIE; the interaction may be mediated by the RRM2 domain of HNRNPA2B1, and HNRNPA2B1 may interact simultaneously with FAM76B and either NFKBIA or NFKBIE to form a complex. Asymmetric dimethylation at Arg-266 constitutes the major methylation site. According to a report, methylation affects subcellular location and promotes nuclear localization. According to another report, methylation at Arg-266 does not influence nucleocytoplasmic shuttling. In terms of processing, sumoylated in exosomes, promoting miRNAs-binding. In the brain, isoform A2 and isoform B1 are abundant in large ganglion-type neurons, such as Purkinje cells, and are less abundant in neighboring glia cells. Isoform A2 is more abundant than isoform B1 in brain. In testis, isoform A2 and isoform B1 are present in spermatogonia and spermatocytes, but not in spermatids or sperm. Isoform A2 is more abundant in the adrenal medulla than in the cortical cells. Isoform B1 is found in both adrenal medulla and cortical cells. Isoform A2 is more abundant than isoform B1 in the adrenal gland. Isoform A2 and isoform B1 are both detected in pancreas and kidney, and at lower levels in heart and lung. Isoform B1 is more abundant than isoform A2 in heart, lung and intestine (at protein level). Isoform A2b and isoform B1b are testis-specific.

It is found in the nucleus. It localises to the cytoplasm. The protein resides in the nucleoplasm. Its subcellular location is the cytoplasmic granule. The protein localises to the secreted. It is found in the extracellular exosome. Its function is as follows. Heterogeneous nuclear ribonucleoprotein (hnRNP) that associates with nascent pre-mRNAs, packaging them into hnRNP particles. The hnRNP particle arrangement on nascent hnRNA is non-random and sequence-dependent and serves to condense and stabilize the transcripts and minimize tangling and knotting. Packaging plays a role in various processes such as transcription, pre-mRNA processing, RNA nuclear export, subcellular location, mRNA translation and stability of mature mRNAs. Forms hnRNP particles with at least 20 other different hnRNP and heterogeneous nuclear RNA in the nucleus. Involved in transport of specific mRNAs to the cytoplasm in oligodendrocytes and neurons: acts by specifically recognizing and binding the A2RE (21 nucleotide hnRNP A2 response element) or the A2RE11 (derivative 11 nucleotide oligonucleotide) sequence motifs present on some mRNAs, and promotes their transport to the cytoplasm. Specifically binds single-stranded telomeric DNA sequences, protecting telomeric DNA repeat against endonuclease digestion. Also binds other RNA molecules, such as primary miRNA (pri-miRNAs): acts as a nuclear 'reader' of the N6-methyladenosine (m6A) mark by specifically recognizing and binding a subset of nuclear m6A-containing pri-miRNAs. Binding to m6A-containing pri-miRNAs promotes pri-miRNA processing by enhancing binding of DGCR8 to pri-miRNA transcripts. Involved in miRNA sorting into exosomes following sumoylation, possibly by binding (m6A)-containing pre-miRNAs. Acts as a regulator of efficiency of mRNA splicing, possibly by binding to m6A-containing pre-mRNAs. Plays a role in the splicing of pyruvate kinase PKM by binding repressively to sequences flanking PKM exon 9, inhibiting exon 9 inclusion and resulting in exon 10 inclusion and production of the PKM M2 isoform. Also plays a role in the activation of the innate immune response. Mechanistically, senses the presence of viral DNA in the nucleus, homodimerizes and is demethylated by JMJD6. In turn, translocates to the cytoplasm where it activates the TBK1-IRF3 pathway, leading to interferon alpha/beta production. The protein is Heterogeneous nuclear ribonucleoproteins A2/B1 of Rattus norvegicus (Rat).